Consider the following 216-residue polypeptide: ATP phosphoribosyltransferase (216 aa).

Belongs to the ATP phosphoribosyltransferase family. Short subfamily. Heteromultimer composed of HisG and HisZ subunits.

It localises to the cytoplasm. The enzyme catalyses 1-(5-phospho-beta-D-ribosyl)-ATP + diphosphate = 5-phospho-alpha-D-ribose 1-diphosphate + ATP. Its pathway is amino-acid biosynthesis; L-histidine biosynthesis; L-histidine from 5-phospho-alpha-D-ribose 1-diphosphate: step 1/9. Its function is as follows. Catalyzes the condensation of ATP and 5-phosphoribose 1-diphosphate to form N'-(5'-phosphoribosyl)-ATP (PR-ATP). Has a crucial role in the pathway because the rate of histidine biosynthesis seems to be controlled primarily by regulation of HisG enzymatic activity. This is ATP phosphoribosyltransferase from Acidovorax ebreus (strain TPSY) (Diaphorobacter sp. (strain TPSY)).